Here is a 272-residue protein sequence, read N- to C-terminus: Ribosomal RNA small subunit methyltransferase A (272 aa).

S-adenosyl-L-methionine-binding residues include N18, L20, G45, E66, D91, and N113.

This sequence belongs to the class I-like SAM-binding methyltransferase superfamily. rRNA adenine N(6)-methyltransferase family. RsmA subfamily.

It is found in the cytoplasm. The catalysed reaction is adenosine(1518)/adenosine(1519) in 16S rRNA + 4 S-adenosyl-L-methionine = N(6)-dimethyladenosine(1518)/N(6)-dimethyladenosine(1519) in 16S rRNA + 4 S-adenosyl-L-homocysteine + 4 H(+). In terms of biological role, specifically dimethylates two adjacent adenosines (A1518 and A1519) in the loop of a conserved hairpin near the 3'-end of 16S rRNA in the 30S particle. May play a critical role in biogenesis of 30S subunits. This chain is Ribosomal RNA small subunit methyltransferase A, found in Proteus mirabilis (strain HI4320).